We begin with the raw amino-acid sequence, 440 residues long: UDP-N-acetylmuramoylalanine--D-glutamate ligase (440 aa).

115–121 (GSNGKST) is an ATP binding site.

The protein belongs to the MurCDEF family.

The protein resides in the cytoplasm. It carries out the reaction UDP-N-acetyl-alpha-D-muramoyl-L-alanine + D-glutamate + ATP = UDP-N-acetyl-alpha-D-muramoyl-L-alanyl-D-glutamate + ADP + phosphate + H(+). The protein operates within cell wall biogenesis; peptidoglycan biosynthesis. Cell wall formation. Catalyzes the addition of glutamate to the nucleotide precursor UDP-N-acetylmuramoyl-L-alanine (UMA). The protein is UDP-N-acetylmuramoylalanine--D-glutamate ligase of Aliivibrio fischeri (strain ATCC 700601 / ES114) (Vibrio fischeri).